The following is a 185-amino-acid chain: MIADVKKSAEQKMQKSLDALKVDFSKVRSGRPHTGLLDHIMVDYYGTPTPIKQLANVTLADARTIGIIPWDKKIFSAIEKAIRDSDLGLNPMTVSDMVRVPMPPLTEERRKDLTKIVKTEAEAARVAMRNIRRDANAHLKELLKDKLIAEDEDRRAQDEIQKLTDRYIAEVDKLLQTKEAELMAV.

It belongs to the RRF family.

It is found in the cytoplasm. Responsible for the release of ribosomes from messenger RNA at the termination of protein biosynthesis. May increase the efficiency of translation by recycling ribosomes from one round of translation to another. The sequence is that of Ribosome-recycling factor from Nitrosomonas europaea (strain ATCC 19718 / CIP 103999 / KCTC 2705 / NBRC 14298).